The following is a 1515-amino-acid chain: Apolipophorin (1515 aa).

One can recognise a VWFD domain in the interval 952 to 1118 (LRGVVVNGQH…NSYRLASSCP (167 aa)). A disulfide bond links Cys-976 and Cys-1117. Asn-988 carries N-linked (GlcNAc...) asparagine glycosylation.

In terms of tissue distribution, hemolymph.

It localises to the secreted. Mediates transport for various types of lipids in hemolymph. Acts by forming lipoprotein particles that bind lipoproteins and lipids. Binds the A.niger cell wall component alpha-1,3-glucan, a fungal pathogen-associated molecular pattern (PAMP) that activates the host immune response. In Galleria mellonella (Greater wax moth), this protein is Apolipophorin.